The primary structure comprises 244 residues: tRNA pseudouridine synthase A (244 aa).

Aspartate 52 serves as the catalytic Nucleophile. Tyrosine 110 is a substrate binding site.

It belongs to the tRNA pseudouridine synthase TruA family. In terms of assembly, homodimer.

The catalysed reaction is uridine(38/39/40) in tRNA = pseudouridine(38/39/40) in tRNA. Its function is as follows. Formation of pseudouridine at positions 38, 39 and 40 in the anticodon stem and loop of transfer RNAs. This chain is tRNA pseudouridine synthase A, found in Geobacter sulfurreducens (strain ATCC 51573 / DSM 12127 / PCA).